Reading from the N-terminus, the 526-residue chain is Exodeoxyribonuclease 7 large subunit (526 aa).

The interval 499–526 is disordered; the sequence is AGEDGTPSQAPKKRPARAGEPTKQGSLF.

It belongs to the XseA family. Heterooligomer composed of large and small subunits.

The protein localises to the cytoplasm. It carries out the reaction Exonucleolytic cleavage in either 5'- to 3'- or 3'- to 5'-direction to yield nucleoside 5'-phosphates.. Its function is as follows. Bidirectionally degrades single-stranded DNA into large acid-insoluble oligonucleotides, which are then degraded further into small acid-soluble oligonucleotides. The polypeptide is Exodeoxyribonuclease 7 large subunit (Sinorhizobium medicae (strain WSM419) (Ensifer medicae)).